The sequence spans 204 residues: Protein C (204 aa).

The disordered stretch occupies residues 1-75 (MPSFLRGILR…TTKTEQSQRR (75 aa)). Residues 10-20 (RPKERHHENKN) are compositionally biased toward basic and acidic residues. Residues 25–34 (SSDSLTSSYP) show a composition bias toward low complexity. Positions 60-70 (HANLTITTKTE) are enriched in polar residues.

This sequence belongs to the respirovirus protein C family.

In Homo sapiens (Human), this protein is Protein C (P/V/C).